Consider the following 117-residue polypeptide: MNVAETYEPTPIIFTDNAAAKVKSLIEDEGNDELSLRVFVTGGGCSGFQYGFSFDEAVNEDDTIVEKDGVRLVVDSLSYQYLVGAEVDFREGLEGAQFVIKNPNASTTCGCGSSFSI.

The iron-sulfur cluster site is built by C45, C109, and C111.

The protein belongs to the HesB/IscA family. Homodimer. Iron-sulfur cluster serves as cofactor.

Its function is as follows. Required for insertion of 4Fe-4S clusters for at least IspG. The protein is Iron-sulfur cluster insertion protein ErpA of Hahella chejuensis (strain KCTC 2396).